Consider the following 131-residue polypeptide: L-aspartate semialdehyde sulfurtransferase iron-sulfur subunit (131 aa).

2 4Fe-4S ferredoxin-type domains span residues 73–102 (KVIK…MDED) and 103–131 (YNVV…EIFE). 8 residues coordinate [4Fe-4S] cluster: Cys82, Cys85, Cys88, Cys92, Cys112, Cys115, Cys118, and Cys122.

May form a complex with MJ0100. [4Fe-4S] cluster is required as a cofactor.

The protein operates within amino-acid biosynthesis. Required for O-acetylhomoserine sulfhydrylase (OAHS)-independent homocysteine (Hcy) biosynthesis. Together with MJ0100, catalyzes the condensation of sulfide with aspartate semialdehyde to generate homocysteine. May be involved in the reduction of the disulfide formed in MJ0100. This is L-aspartate semialdehyde sulfurtransferase iron-sulfur subunit from Methanocaldococcus jannaschii (strain ATCC 43067 / DSM 2661 / JAL-1 / JCM 10045 / NBRC 100440) (Methanococcus jannaschii).